We begin with the raw amino-acid sequence, 228 residues long: GrpE protein homolog, mitochondrial (228 aa).

A compositionally biased stretch (basic and acidic residues) spans 46–57 (DEAKSEESKENN). A disordered region spans residues 46 to 66 (DEAKSEESKENNEDLTEEQSE).

The protein belongs to the GrpE family. As to quaternary structure, component of the PAM complex, at least composed of SSC1 (mtHsp70), MGE1, TIM44, PAM16/TIM16, PAM17 and PAM18/TIM14. Interacts with SSQ1. The N-terminus is blocked.

Its subcellular location is the mitochondrion matrix. Essential component of the PAM complex, a complex required for the translocation of transit peptide-containing proteins from the inner membrane into the mitochondrial matrix in an ATP-dependent manner. Seems to control the nucleotide-dependent binding of SSC1 to substrate proteins and the association of SSC1 with TIM44. The polypeptide is GrpE protein homolog, mitochondrial (MGE1) (Saccharomyces cerevisiae (strain ATCC 204508 / S288c) (Baker's yeast)).